The primary structure comprises 156 residues: Bacterial microcompartment shell protein PduK (156 aa).

Positions 4–89 (SLGLLEVSGL…PGDGILSHSV (86 aa)) constitute a BMC domain. The disordered stretch occupies residues 81–119 (GDGILSHSVTPESESEPAPAPTPVVPHEEIPEDHAAPEA). Over residues 106–116 (PHEEIPEDHAA) the composition is skewed to basic and acidic residues.

The protein belongs to the bacterial microcompartments protein family. As to quaternary structure, interacts with shell protein PduA and assembly protein PduM. Interacts with PduP, probably with its first 18 residues. It depends on Fe cation as a cofactor.

It is found in the bacterial microcompartment. It participates in polyol metabolism; 1,2-propanediol degradation. A minor shell protein of the bacterial microcompartment (BMC) dedicated to 1,2-propanediol (1,2-PD) degradation. Functionally, expression of a cosmid containing the full 21-gene pdu operon in E.coli allows E.coli to grow on 1,2-propanediol (1,2-PD) with the appearance of bacterial microcompartments (BMC) in its cytoplasm. Overexpression of this protein leads to the appearance of a single large aggregate complex in the cytoplasm. Its function is as follows. The 1,2-PD-specific bacterial microcompartment (BMC) concentrates low levels of 1,2-PD catabolic enzymes, concentrates volatile reaction intermediates thus enhancing pathway flux and keeps the level of toxic, mutagenic propionaldehyde low. In Citrobacter freundii, this protein is Bacterial microcompartment shell protein PduK.